Consider the following 165-residue polypeptide: Phosphopantetheine adenylyltransferase (165 aa).

Position 9 (threonine 9) interacts with substrate. ATP-binding positions include 9–10 (TF) and histidine 17. Substrate is bound by residues lysine 41, leucine 78, and arginine 92. ATP contacts are provided by residues 93–95 (GLR), glutamate 103, and 128–134 (RQAIASK).

This sequence belongs to the bacterial CoaD family. Homohexamer. Requires Mg(2+) as cofactor.

It is found in the cytoplasm. It carries out the reaction (R)-4'-phosphopantetheine + ATP + H(+) = 3'-dephospho-CoA + diphosphate. It functions in the pathway cofactor biosynthesis; coenzyme A biosynthesis; CoA from (R)-pantothenate: step 4/5. Reversibly transfers an adenylyl group from ATP to 4'-phosphopantetheine, yielding dephospho-CoA (dPCoA) and pyrophosphate. The sequence is that of Phosphopantetheine adenylyltransferase from Ruegeria pomeroyi (strain ATCC 700808 / DSM 15171 / DSS-3) (Silicibacter pomeroyi).